Here is a 225-residue protein sequence, read N- to C-terminus: Protein-L-isoaspartate O-methyltransferase (225 aa).

Residue Ser75 is part of the active site.

Belongs to the methyltransferase superfamily. L-isoaspartyl/D-aspartyl protein methyltransferase family.

It localises to the cytoplasm. It carries out the reaction [protein]-L-isoaspartate + S-adenosyl-L-methionine = [protein]-L-isoaspartate alpha-methyl ester + S-adenosyl-L-homocysteine. Functionally, catalyzes the methyl esterification of L-isoaspartyl residues in peptides and proteins that result from spontaneous decomposition of normal L-aspartyl and L-asparaginyl residues. It plays a role in the repair and/or degradation of damaged proteins. This is Protein-L-isoaspartate O-methyltransferase from Stenotrophomonas maltophilia (strain K279a).